The chain runs to 647 residues: METVVRRCPFLSRVPQAFLQKAGKSLLFYAQNCPKMMEIGAKPAPRALSTSAVLCQQVTETPPANEKDKAAKAEVQQAPDGSQQAPDGSQQTADGTQLPSGHPSLASSQGTGSKCPFLAAEMSQGGSSVFRKASLALQEDVQEMHAVREEVAQTSVNPSVINVKTEGGELNGLLKNFQDIMRKQRPERVSHLLQDNLPKSVCTFQYDRFFEKKIDEKKNDHSYRVFKTVNRKAQCFPMADDYSDSLISKKQVSVWCSNDYLGMSRHPRVCGAVIDTLKQHGTGAGGTRNISGTSKFHVDLEQELADLHGKDAALLFSSCFVANDSTLFTLAKMMPGCEIYSDAGNHASMIQGIRNSGVPKYIFRHNDVSHLRELLQRSDPAVPKIVAFETVHSMDGAVCPLEELCDVAHEFGAITFVDEVHAVGLYGLQGGGIGDRDGVMPKMDIISGTLGKAIGCVGGYIASTSSLIDTVRSYAAGFIFTTSLPPMLLAGALESVRILRSTEGRTLRRQHQRNVKLMRQMLMDAGLPVVHCPSHIIPVRVADAAKNTEVCDELMTRHNIYVQAINYPTVPRGEELLRIAPTPHHTPQMMSYFVDNLLATWKRVGLELKPHSSAECNFCRRPLHFEMMSEREKSYFSGMSKLVSAQA.

The N-terminal 56 residues, 1–56 (METVVRRCPFLSRVPQAFLQKAGKSLLFYAQNCPKMMEIGAKPAPRALSTSAVLCQ), are a transit peptide targeting the mitochondrion. The tract at residues 61–112 (TPPANEKDKAAKAEVQQAPDGSQQAPDGSQQTADGTQLPSGHPSLASSQGTG) is disordered. Residues 79-112 (PDGSQQAPDGSQQTADGTQLPSGHPSLASSQGTG) are compositionally biased toward polar residues. Positions 224, 341, and 360 each coordinate substrate. Positions 393, 421, and 449 each coordinate pyridoxal 5'-phosphate. The active site involves K452. K452 carries the N6-(pyridoxal phosphate)lysine modification. T481 and T482 together coordinate pyridoxal 5'-phosphate. T569 serves as a coordination point for substrate. The residue at position 583 (P583) is a Hydroxyproline.

The protein belongs to the class-II pyridoxal-phosphate-dependent aminotransferase family. Homodimer. Interacts (hydroxylated form) with VHL. The cofactor is pyridoxal 5'-phosphate. In terms of processing, in normoxia, is hydroxylated at Pro-583, promoting interaction with VHL, initiating ubiquitination and subsequent degradation via the proteasome. Ubiquitinated; in normoxia following hydroxylation and interaction with VHL, leading to its subsequent degradation via the proteasome.

It is found in the mitochondrion inner membrane. It carries out the reaction succinyl-CoA + glycine + H(+) = 5-aminolevulinate + CO2 + CoA. Its pathway is porphyrin-containing compound metabolism; protoporphyrin-IX biosynthesis; 5-aminolevulinate from glycine: step 1/1. Its function is as follows. Catalyzes the pyridoxal 5'-phosphate (PLP)-dependent condensation of succinyl-CoA and glycine to form aminolevulinic acid (ALA), with CoA and CO2 as by-products. This Bos taurus (Bovine) protein is 5-aminolevulinate synthase, non-specific, mitochondrial (ALAS1).